The primary structure comprises 426 residues: Serine--tRNA ligase (426 aa).

An L-serine-binding site is contributed by 231–233 (TSE). 262–264 (RSE) serves as a coordination point for ATP. Glutamate 285 is a binding site for L-serine. 349 to 352 (EISS) lines the ATP pocket. Serine 385 serves as a coordination point for L-serine.

This sequence belongs to the class-II aminoacyl-tRNA synthetase family. Type-1 seryl-tRNA synthetase subfamily. As to quaternary structure, homodimer. The tRNA molecule binds across the dimer.

Its subcellular location is the cytoplasm. It catalyses the reaction tRNA(Ser) + L-serine + ATP = L-seryl-tRNA(Ser) + AMP + diphosphate + H(+). The catalysed reaction is tRNA(Sec) + L-serine + ATP = L-seryl-tRNA(Sec) + AMP + diphosphate + H(+). The protein operates within aminoacyl-tRNA biosynthesis; selenocysteinyl-tRNA(Sec) biosynthesis; L-seryl-tRNA(Sec) from L-serine and tRNA(Sec): step 1/1. Its function is as follows. Catalyzes the attachment of serine to tRNA(Ser). Is also able to aminoacylate tRNA(Sec) with serine, to form the misacylated tRNA L-seryl-tRNA(Sec), which will be further converted into selenocysteinyl-tRNA(Sec). The protein is Serine--tRNA ligase of Legionella pneumophila subsp. pneumophila (strain Philadelphia 1 / ATCC 33152 / DSM 7513).